We begin with the raw amino-acid sequence, 137 residues long: Large ribosomal subunit protein uL16 (137 aa).

Belongs to the universal ribosomal protein uL16 family. Part of the 50S ribosomal subunit.

Functionally, binds 23S rRNA and is also seen to make contacts with the A and possibly P site tRNAs. This is Large ribosomal subunit protein uL16 from Spiroplasma kunkelii.